Here is a 202-residue protein sequence, read N- to C-terminus: Dynein regulatory complex protein 12 (202 aa).

The disordered stretch occupies residues 1–29; sequence MPPKKKGIGGSKKEKTKKSTPEKDDGLTE. The span at 11–29 shows a compositional bias: basic and acidic residues; it reads SKKEKTKKSTPEKDDGLTE. Residues 50-161 adopt a coiled-coil conformation; that stretch reads GVARQATAVR…ERECEKILHG (112 aa).

It belongs to the DRC12 family. As to quaternary structure, component of the nexin-dynein regulatory complex (N-DRC).

It localises to the cytoplasm. The protein localises to the cytoskeleton. Its subcellular location is the flagellum axoneme. In terms of biological role, component of the nexin-dynein regulatory complex (N-DRC), a key regulator of ciliary/flagellar motility which maintains the alignment and integrity of the distal axoneme and regulates microtubule sliding in motile axonemes. This Danio rerio (Zebrafish) protein is Dynein regulatory complex protein 12 (drc12).